The sequence spans 1073 residues: Carbamoyl phosphate synthase large chain (1073 aa).

Positions 1-403 are carboxyphosphate synthetic domain; the sequence is MPKRTDIKSI…SLQKALRGLE (403 aa). ATP contacts are provided by R129, R169, G175, G176, E208, L210, E215, G241, V242, H243, Q285, and E299. Residues 133 to 328 enclose the ATP-grasp 1 domain; that stretch reads DKAMKDIGLE…IAKIAAKLAI (196 aa). Mg(2+) contacts are provided by Q285, E299, and N301. 3 residues coordinate Mn(2+): Q285, E299, and N301. The segment at 404 to 553 is oligomerization domain; that stretch reads VGACGLDPKV…YSTYEEECEA (150 aa). Positions 554–935 are carbamoyl phosphate synthetic domain; the sequence is NPSTRDKIMI…AFAKAQMGAS (382 aa). The region spanning 678-869 is the ATP-grasp 2 domain; it reads QQMVQRLSLL…LAMIAARVMA (192 aa). 10 residues coordinate ATP: R714, H753, L755, E760, G785, V786, H787, S788, Q828, and E840. Positions 828, 840, and 842 each coordinate Mg(2+). 3 residues coordinate Mn(2+): Q828, E840, and N842. Residues 936 to 1073 form the MGS-like domain; it reads EVLPTGGTAF…LQDLHAGLKA (138 aa). The tract at residues 936-1073 is allosteric domain; the sequence is EVLPTGGTAF…LQDLHAGLKA (138 aa).

This sequence belongs to the CarB family. In terms of assembly, composed of two chains; the small (or glutamine) chain promotes the hydrolysis of glutamine to ammonia, which is used by the large (or ammonia) chain to synthesize carbamoyl phosphate. Tetramer of heterodimers (alpha,beta)4. Mg(2+) serves as cofactor. It depends on Mn(2+) as a cofactor.

The enzyme catalyses hydrogencarbonate + L-glutamine + 2 ATP + H2O = carbamoyl phosphate + L-glutamate + 2 ADP + phosphate + 2 H(+). The catalysed reaction is hydrogencarbonate + NH4(+) + 2 ATP = carbamoyl phosphate + 2 ADP + phosphate + 2 H(+). It participates in amino-acid biosynthesis; L-arginine biosynthesis; carbamoyl phosphate from bicarbonate: step 1/1. Its pathway is pyrimidine metabolism; UMP biosynthesis via de novo pathway; (S)-dihydroorotate from bicarbonate: step 1/3. In terms of biological role, large subunit of the glutamine-dependent carbamoyl phosphate synthetase (CPSase). CPSase catalyzes the formation of carbamoyl phosphate from the ammonia moiety of glutamine, carbonate, and phosphate donated by ATP, constituting the first step of 2 biosynthetic pathways, one leading to arginine and/or urea and the other to pyrimidine nucleotides. The large subunit (synthetase) binds the substrates ammonia (free or transferred from glutamine from the small subunit), hydrogencarbonate and ATP and carries out an ATP-coupled ligase reaction, activating hydrogencarbonate by forming carboxy phosphate which reacts with ammonia to form carbamoyl phosphate. This is Carbamoyl phosphate synthase large chain from Pseudomonas putida (strain ATCC 47054 / DSM 6125 / CFBP 8728 / NCIMB 11950 / KT2440).